Here is a 639-residue protein sequence, read N- to C-terminus: DNA primase (639 aa).

The segment at 41 to 65 (CPFHNEKSPSFHVRPNHGHFHCFGC) adopts a CHC2-type zinc-finger fold. The Toprim domain maps to 262 to 348 (HQAVVVEGYT…AGQSFVAVAP (87 aa)). Glu-268, Asp-319, and Asp-321 together coordinate Mg(2+). Residues 460–479 (RAAQRPTAGPPTELAVRPDP) are disordered.

This sequence belongs to the DnaG primase family. Monomer. Interacts with DnaB. Requires Zn(2+) as cofactor. It depends on Mg(2+) as a cofactor.

The enzyme catalyses ssDNA + n NTP = ssDNA/pppN(pN)n-1 hybrid + (n-1) diphosphate.. Functionally, RNA polymerase that catalyzes the synthesis of short RNA molecules used as primers for DNA polymerase during DNA replication. The chain is DNA primase from Mycobacterium bovis (strain ATCC BAA-935 / AF2122/97).